The primary structure comprises 192 residues: NADH-quinone oxidoreductase subunit B (192 aa).

Positions 71, 72, 136, and 166 each coordinate [4Fe-4S] cluster.

Belongs to the complex I 20 kDa subunit family. In terms of assembly, NDH-1 is composed of 14 different subunits. Subunits NuoB, C, D, E, F, and G constitute the peripheral sector of the complex. The cofactor is [4Fe-4S] cluster.

The protein localises to the cell inner membrane. It catalyses the reaction a quinone + NADH + 5 H(+)(in) = a quinol + NAD(+) + 4 H(+)(out). NDH-1 shuttles electrons from NADH, via FMN and iron-sulfur (Fe-S) centers, to quinones in the respiratory chain. Couples the redox reaction to proton translocation (for every two electrons transferred, four hydrogen ions are translocated across the cytoplasmic membrane), and thus conserves the redox energy in a proton gradient. The chain is NADH-quinone oxidoreductase subunit B from Azorhizobium caulinodans (strain ATCC 43989 / DSM 5975 / JCM 20966 / LMG 6465 / NBRC 14845 / NCIMB 13405 / ORS 571).